Reading from the N-terminus, the 390-residue chain is Homeobox protein Meis1 (390 aa).

The 85-residue stretch at 108 to 192 folds into the MEIS N-terminal domain; it reads GGDVCSSESF…IDLVIDDREG (85 aa). A compositionally biased stretch (basic and acidic residues) spans 190 to 202; the sequence is REGGSKSDSEDVT. The segment at 190–279 is disordered; the sequence is REGGSKSDSE…KKRHKKRGIF (90 aa). The span at 203 to 213 shows a compositional bias: polar residues; that stretch reads RSANLTDQPSW. The segment at residues 272–334 is a DNA-binding region (homeobox; TALE-type); that stretch reads RHKKRGIFPK…NARRRIVQPM (63 aa). The interval 299 to 329 is interaction with DNA; that stretch reads YPSEEQKKQLAQDTGLTILQVNNWFINARRR. The interval 335–390 is required for transcriptional activation; sequence IDQSNRAVSQGTPYNPDGQPMGGFVMDGQQHMGIRAPGPMSGMGMNMGMEGQWHYM.

Belongs to the TALE/MEIS homeobox family. Interacts with the N-terminal region of PBX1 to form a heterodimer which binds DNA including a cAMP-responsive sequence in CYP17. Also forms heterodimers with PBX2. Forms heterotrimers with PBX1 or PBX2 and a number of HOX proteins including HOXA9, HOXD4 and HOXD9 where it acts as a non-DNA-binding partner. Also forms heterotrimers with PBX1 and HOX proteins including HOXD9 and HOXD10 where PBX1 is the non-DNA-binding partner. Heterodimer with DLX3. Heterodimer with HOXB13. Expressed at high levels in the lung with lower levels detected in the heart and brain. Expressed in pancreatic islets (beta-cells and non-beta-cells).

It localises to the nucleus. Its function is as follows. Acts as a transcriptional regulator of PAX6. Also acts as a transcriptional activator of PF4 in complex with PBX1 or PBX2. Required for hematopoiesis, megakaryocyte lineage development and vascular patterning. May function as a cofactor for HOXA7 and HOXA9 in the induction of myeloid leukemias. In Mus musculus (Mouse), this protein is Homeobox protein Meis1 (Meis1).